Reading from the N-terminus, the 528-residue chain is Na(+)/H(+) antiporter NhaB (528 aa).

A run of 10 helical transmembrane segments spans residues 28–50 (FLVI…VLVV), 67–87 (PGGL…SQVL), 98–118 (LLLV…LFVF), 140–160 (AFLS…AVAV), 240–260 (FFLR…FTCF), 305–325 (ALIG…VGLI), 350–370 (EEAL…GVII), 391–411 (LVIF…VFVG), 449–469 (ATPN…APLI), and 476–496 (MVWM…MAIE).

Belongs to the NhaB Na(+)/H(+) (TC 2.A.34) antiporter family.

The protein resides in the cell inner membrane. The catalysed reaction is 2 Na(+)(in) + 3 H(+)(out) = 2 Na(+)(out) + 3 H(+)(in). Its function is as follows. Na(+)/H(+) antiporter that extrudes sodium in exchange for external protons. The sequence is that of Na(+)/H(+) antiporter NhaB from Shewanella frigidimarina (strain NCIMB 400).